Here is a 92-residue protein sequence, read N- to C-terminus: Sec-independent protein translocase protein TatA (92 aa).

The helical transmembrane segment at 2–22 (IPANFGGTELIILLVIILLLF) threads the bilayer. A disordered region spans residues 43–92 (KGTSGAYEELEEKKGEEEKDEGGKKEAEASGRGEEEQQARAAGEAGRKQG). Basic and acidic residues predominate over residues 53-80 (EEKKGEEEKDEGGKKEAEASGRGEEEQQ).

This sequence belongs to the TatA/E family. The Tat system comprises two distinct complexes: a TatABC complex, containing multiple copies of TatA, TatB and TatC subunits, and a separate TatA complex, containing only TatA subunits. Substrates initially bind to the TatABC complex, which probably triggers association of the separate TatA complex to form the active translocon.

The protein resides in the cell membrane. Functionally, part of the twin-arginine translocation (Tat) system that transports large folded proteins containing a characteristic twin-arginine motif in their signal peptide across membranes. TatA could form the protein-conducting channel of the Tat system. This is Sec-independent protein translocase protein TatA from Rubrobacter xylanophilus (strain DSM 9941 / JCM 11954 / NBRC 16129 / PRD-1).